The following is a 302-amino-acid chain: MNETQLTHLQQLEAESIYILREVVAEFENPVMLYSIGKDSSVMLHLARKAFYPAKLPFPLLHVDTGWKFREMYEFRDKTAKEYGFDLKVYRNPQGAQLGINPFIHGSAKHTDIMKTEGLKQALDKYGFDAAFGGARRDEEKSRAKERIYSFRDRSHRWDPKNQRPELWQNYNGQINKGESIRVFPLSNWTELDIWQYIYLENIDIVPLYFAKHRPVIERDGTLIMVDDDRIDLKAGEVITQQKVRFRTLGCWPLTGAIPSQADTLPAIIEEMLISTSSERQGRLIDSDQSASMELKKRQGYF.

It belongs to the PAPS reductase family. CysD subfamily. Heterodimer composed of CysD, the smaller subunit, and CysN.

It catalyses the reaction sulfate + ATP + H(+) = adenosine 5'-phosphosulfate + diphosphate. It functions in the pathway sulfur metabolism; hydrogen sulfide biosynthesis; sulfite from sulfate: step 1/3. In terms of biological role, with CysN forms the ATP sulfurylase (ATPS) that catalyzes the adenylation of sulfate producing adenosine 5'-phosphosulfate (APS) and diphosphate, the first enzymatic step in sulfur assimilation pathway. APS synthesis involves the formation of a high-energy phosphoric-sulfuric acid anhydride bond driven by GTP hydrolysis by CysN coupled to ATP hydrolysis by CysD. In Proteus mirabilis (strain HI4320), this protein is Sulfate adenylyltransferase subunit 2.